The primary structure comprises 219 residues: Chloramphenicol acetyltransferase (219 aa).

His-190 serves as the catalytic Proton acceptor.

Belongs to the chloramphenicol acetyltransferase family. As to quaternary structure, homotrimer.

The enzyme catalyses chloramphenicol + acetyl-CoA = chloramphenicol 3-acetate + CoA. In terms of biological role, this enzyme is an effector of chloramphenicol resistance in bacteria. This chain is Chloramphenicol acetyltransferase (catB), found in Clostridium butyricum.